A 324-amino-acid chain; its full sequence is MITTLITHILNPLAFIVPVLLAVAFLTLLERKVLGYMQLRKGPNIVGPYGLLQPIADGVKLFIKEPVRPSTSSPILFILTPMLALTLAMTLWAPLPLPYPVLDLNLAILLFVALSSLAVYSILGSGWASNSKYALVGALRAVAQTISYEVSLGLILLSLIIFTGGFTLQTFNTAQESIWLIIPAWPLAAMWYISTLAETNRAPFDLTEGESELVSGFNVEYAGGPFALFFLAEYANILFMNTLSASLFLGASHIPMLPELTTMNLMTKAAVLSLVFLWVRASYPRFRYDQLMHLIWKNFLPLTLALVIWHLALPITFAGLPPQM.

9 helical membrane passes run 9 to 29 (ILNP…LTLL), 43 to 63 (PNIV…KLFI), 75 to 95 (ILFI…WAPL), 106 to 126 (LAIL…LGSG), 146 to 166 (ISYE…TGGF), 177 to 197 (SIWL…STLA), 228 to 250 (LFFL…LFLG), 259 to 279 (ELTT…FLWV), and 299 to 319 (FLPL…TFAG).

This sequence belongs to the complex I subunit 1 family.

It localises to the mitochondrion inner membrane. The catalysed reaction is a ubiquinone + NADH + 5 H(+)(in) = a ubiquinol + NAD(+) + 4 H(+)(out). In terms of biological role, core subunit of the mitochondrial membrane respiratory chain NADH dehydrogenase (Complex I) that is believed to belong to the minimal assembly required for catalysis. Complex I functions in the transfer of electrons from NADH to the respiratory chain. The immediate electron acceptor for the enzyme is believed to be ubiquinone. The protein is NADH-ubiquinone oxidoreductase chain 1 (MT-ND1) of Tetraodon nigroviridis (Spotted green pufferfish).